Consider the following 172-residue polypeptide: MMDAVRARIRDVPDFPKKGIVFKDITPVLSDPHTFREVIDAFVGRWKGERVDKVIGIESRGFIFAAPIAYALGAGFTIVRKPGKLPWETIREVYALEYGEGALELHIDAIGPGDRVLVVDDVLATGGTAGAAGRLVARQGAELLGYSFLAELSFLNGARQLGHAKVHSLLTF.

It belongs to the purine/pyrimidine phosphoribosyltransferase family. As to quaternary structure, homodimer.

The protein resides in the cytoplasm. The catalysed reaction is AMP + diphosphate = 5-phospho-alpha-D-ribose 1-diphosphate + adenine. It functions in the pathway purine metabolism; AMP biosynthesis via salvage pathway; AMP from adenine: step 1/1. Catalyzes a salvage reaction resulting in the formation of AMP, that is energically less costly than de novo synthesis. This is Adenine phosphoribosyltransferase from Anaeromyxobacter dehalogenans (strain 2CP-C).